Consider the following 220-residue polypeptide: Putative pyrophosphatase PpaX (220 aa).

D9 acts as the Nucleophile in catalysis.

Belongs to the HAD-like hydrolase superfamily. PpaX family. The cofactor is Mg(2+).

It catalyses the reaction diphosphate + H2O = 2 phosphate + H(+). This chain is Putative pyrophosphatase PpaX, found in Caldanaerobacter subterraneus subsp. tengcongensis (strain DSM 15242 / JCM 11007 / NBRC 100824 / MB4) (Thermoanaerobacter tengcongensis).